Reading from the N-terminus, the 359-residue chain is Peptide chain release factor 1 (359 aa).

Gln-234 carries the N5-methylglutamine modification. The tract at residues 283–305 (SQKDAARAADRRAQVGSGDRSER) is disordered.

Belongs to the prokaryotic/mitochondrial release factor family. Post-translationally, methylated by PrmC. Methylation increases the termination efficiency of RF1.

The protein resides in the cytoplasm. Functionally, peptide chain release factor 1 directs the termination of translation in response to the peptide chain termination codons UAG and UAA. This Methylobacterium nodulans (strain LMG 21967 / CNCM I-2342 / ORS 2060) protein is Peptide chain release factor 1.